A 401-amino-acid chain; its full sequence is Bifunctional D-cysteine desulfhydrase/1-aminocyclopropane-1-carboxylate deaminase, mitochondrial (401 aa).

The N-terminal 37 residues, 1 to 37, are a transit peptide targeting the mitochondrion; it reads MRGRSLTLSRVKLELARRSMSATSVPSMADFLTKKPY. Arg-2 carries the N-acetylserine modification. At Lys-93 the chain carries N6-(pyridoxal phosphate)lysine. Residue Ser-120 is the Nucleophile of the active site.

Belongs to the ACC deaminase/D-cysteine desulfhydrase family. Pyridoxal 5'-phosphate is required as a cofactor. Highly expressed in stems and cauline leaves, and at lower levels in roots, rosette leaves and flowers.

The protein localises to the mitochondrion. The catalysed reaction is D-cysteine + H2O = hydrogen sulfide + pyruvate + NH4(+) + H(+). It catalyses the reaction 1-aminocyclopropane-1-carboxylate + H2O = 2-oxobutanoate + NH4(+). Its function is as follows. Catalyzes the production of hydrogen sulfide (H2S) from cysteine. Is mainly responsible for the degradation of cysteine to generate H2S, a regulator of stomatal movement and closure. Has high affinity for D-cysteine. In terms of biological role, possesses 1-aminocyclopropane-1-carboxylic acid (ACC) deaminase activity. Acts as a regulator of ACC levels and causes changes in ethylene levels. The sequence is that of Bifunctional D-cysteine desulfhydrase/1-aminocyclopropane-1-carboxylate deaminase, mitochondrial (DCD) from Arabidopsis thaliana (Mouse-ear cress).